The sequence spans 815 residues: MAHTVQTLSKLLKKTPDEVVTILANAGVDGKNSDSVISAEERKILMSSLSKRPIRRSSMSVFRKAGTKSNAVSVSDVKVKVRSKRLTQPITMIDEQSKVVANEMARAALAALDAGRNADEILLAQDARRLEMVRLQKAQVEVVEIQKETVKKVQEKEAEKKVEKLKTADKPKEGNKPKRLRNTSSDNNTRKQLHVARHNPNRRLKKKDRTHLSQKIQAEQAQHAFQKPIEKVIHEVAIVGNIKVTELAQKMATKAGEVLKVLMGMGVMVTLNDVIDQDTALLVVEEMGHKGIISVEETIEDVLIEQLKYNEHESARPPIVTIMGHVDHGKTSLLDYIRQAKVAHGEVGGITQHIGAYQVQSNGNIITFIDTPGHAAFSKMRFRGANVTDIVILVVAADDGVMPQTIESIKHTQIVGVPMIVAINKIDKEGTDVDKIKQVLSTYDVISEDWGGDVIMVPVSAHTGEGVDALLDAISLTAEILEFSAVSEGPAHGTVLEARLEKGRGKVTTILVQSGTLNKGDIMIAGFEYGKVKQIVDDKGKILKLAMPSMPVEVLGLSGVPNSGDEVIVVGSERKAREVADFRKSKDREVQLQKQQASKMENFLMKMEKGDISTVNVLLKADVRGSAQALIEALEELSTDEVRVKVVSSGVGGINNTDITLAATSSALVLGFNVRADAVARKTADNEGVRVEYYSIIYNLINDVKAIMSGLLSPELSENIIGIASVKNIFKSQKMGDIAGCMVDEGMVKRDSLIRVLRDSVVIFDGKLESLRRFKDDVNEVKSGTECGIGVLNYTDVQPGDQIEIFERVERARIL.

Residues 153–176 (VQEKEAEKKVEKLKTADKPKEGNK) are compositionally biased toward basic and acidic residues. The tract at residues 153-219 (VQEKEAEKKV…THLSQKIQAE (67 aa)) is disordered. Positions 191–209 (KQLHVARHNPNRRLKKKDR) are enriched in basic residues. A tr-type G domain is found at 315 to 482 (ARPPIVTIMG…AISLTAEILE (168 aa)). Residues 324 to 331 (GHVDHGKT) are G1. 324 to 331 (GHVDHGKT) is a GTP binding site. Residues 349-353 (GITQH) are G2. Positions 370 to 373 (DTPG) are G3. GTP-binding positions include 370–374 (DTPGH) and 424–427 (NKID). The interval 424–427 (NKID) is G4. The G5 stretch occupies residues 460–462 (SAH).

The protein belongs to the TRAFAC class translation factor GTPase superfamily. Classic translation factor GTPase family. IF-2 subfamily.

The protein resides in the cytoplasm. Functionally, one of the essential components for the initiation of protein synthesis. Protects formylmethionyl-tRNA from spontaneous hydrolysis and promotes its binding to the 30S ribosomal subunits. Also involved in the hydrolysis of GTP during the formation of the 70S ribosomal complex. The sequence is that of Translation initiation factor IF-2 from Vesicomyosocius okutanii subsp. Calyptogena okutanii (strain HA).